We begin with the raw amino-acid sequence, 417 residues long: Gamma-glutamyl phosphate reductase (417 aa).

It belongs to the gamma-glutamyl phosphate reductase family.

It localises to the cytoplasm. The catalysed reaction is L-glutamate 5-semialdehyde + phosphate + NADP(+) = L-glutamyl 5-phosphate + NADPH + H(+). The protein operates within amino-acid biosynthesis; L-proline biosynthesis; L-glutamate 5-semialdehyde from L-glutamate: step 2/2. Functionally, catalyzes the NADPH-dependent reduction of L-glutamate 5-phosphate into L-glutamate 5-semialdehyde and phosphate. The product spontaneously undergoes cyclization to form 1-pyrroline-5-carboxylate. The protein is Gamma-glutamyl phosphate reductase of Escherichia coli O6:K15:H31 (strain 536 / UPEC).